The sequence spans 153 residues: Protein E6 (153 aa).

2 zinc fingers span residues 37–73 (CHFC…CIKC) and 110–146 (CSEC…CRAC).

Belongs to the papillomaviridae E6 protein family. In terms of assembly, forms homodimers. Interacts with ubiquitin-protein ligase UBE3A/E6-AP; this interaction stimulates UBE3A ubiquitin activity. Interacts with host BAK1.

Its subcellular location is the host cytoplasm. It localises to the host nucleus. Its function is as follows. Plays a major role in the induction and maintenance of cellular transformation. E6 associates with host UBE3A/E6-AP ubiquitin-protein ligase and modulates its activity. Protects host keratinocytes from apoptosis by mediating the degradation of host BAK1. May also inhibit host immune response. In Micromys minutus papillomavirus (MmPV), this protein is Protein E6.